Here is a 541-residue protein sequence, read N- to C-terminus: Atlastin-3 (541 aa).

Residues 1–25 (MLSPQRVAAAASRGADDAMESSKPG) form an N-terminal hypervariable region (HVR) region. Residues 1-445 (MLSPQRVAAA…NVFSTFRTPA (445 aa)) are Cytoplasmic-facing. One can recognise a GB1/RHD3-type G domain in the interval 57–305 (DLDVVVVSVA…LIPYVLNPSK (249 aa)). GDP-binding residues include Arg-70, Lys-71, Gly-72, Lys-73, Ser-74, Phe-75, and Arg-109. Asp-142 is a binding site for Mg(2+). Positions 213, 214, 272, and 275 each coordinate GDP. The segment at 343 to 434 (MLQATAEANN…YENFCKHNGS (92 aa)) is 3HB (three-helix bundle) domain. Position 391 is an N6-acetyllysine (Lys-391). A helical membrane pass occupies residues 446 to 466 (VLFTGIVALYIASGLTGFIGL). A topological domain (lumenal) is located at residue Glu-467. A helical membrane pass occupies residues 468–488 (VVAQLFNCMVGLLLIALLTWG). Topologically, residues 489–541 (YIRYSGQYRELGGAIDFGAAYVLEQASSHIGNSTQATVRDAVVGRPSMDKKAQ) are cytoplasmic. Ser-535 carries the post-translational modification Phosphoserine.

It belongs to the TRAFAC class dynamin-like GTPase superfamily. GB1/RHD3 GTPase family. GB1 subfamily. As to quaternary structure, monomeric and homodimeric. The homodimer, transiently formed by two molecules on opposing membranes, is the active form mediating ER membrane fusion. Interacts with ZFYVE27; both proteins are involved in endoplasmic reticulum tubular network organization. Interacts with REEP5; both proteins are involved in endoplasmic reticulum tubular network organization. In terms of tissue distribution, expressed in the central nervous system and in dorsal root ganglia neurons. Expressed in peripheral tissues (at protein level).

It localises to the endoplasmic reticulum membrane. The catalysed reaction is GTP + H2O = GDP + phosphate + H(+). Atlastin-3 (ATL3) is a membrane-anchored GTPase that mediates the GTP-dependent fusion of endoplasmic reticulum (ER) membranes, maintaining the continuous ER network. It facilitates the formation of three-way junctions where ER tubules intersect. Two atlastin-3 on neighboring ER tubules bind GTP and form loose homodimers through the GB1/RHD3-type G domains and 3HB regions. Upon GTP hydrolysis, the 3HB regions tighten, pulling the membranes together to drive their fusion. After fusion, the homodimer disassembles upon release of inorganic phosphate (Pi). Subsequently, GDP dissociates, resetting the monomers to a conformation ready for a new fusion cycle. The chain is Atlastin-3 from Homo sapiens (Human).